Consider the following 196-residue polypeptide: Imidazoleglycerol-phosphate dehydratase (196 aa).

It belongs to the imidazoleglycerol-phosphate dehydratase family.

The protein resides in the cytoplasm. The enzyme catalyses D-erythro-1-(imidazol-4-yl)glycerol 3-phosphate = 3-(imidazol-4-yl)-2-oxopropyl phosphate + H2O. Its pathway is amino-acid biosynthesis; L-histidine biosynthesis; L-histidine from 5-phospho-alpha-D-ribose 1-diphosphate: step 6/9. The chain is Imidazoleglycerol-phosphate dehydratase from Lachnoclostridium phytofermentans (strain ATCC 700394 / DSM 18823 / ISDg) (Clostridium phytofermentans).